Consider the following 331-residue polypeptide: MVREKVTVSTRTLQWKCVESRVDNKRLCYGRFILSPLIKGQADTIGIAMRRALLGEIEGTCITRAKSEKIPHEYSTIVGIQESVHEILMNLKEIVLRSNLYGTRGAFICARGPGYVTAQDIISPPSVEIVDNTQHIARLMEPIDLCIGLQIERNRGYSIKRPNNFQDGSYPIDAVFMPVRNANHSIHSYGNGNERQEILFLEIWTNGSLTPKEALHEASRNLIDLFIPFLHAEEETLHLEYNQHKSTLPPLTFHDRLAKLRKNKKEIELKYIFIDQLELPPRIYNCLKRSNIHTLLDLLNKSQKDLMKIEDFRIEDVKQLLGILEKHFTID.

The segment at 1–233 is alpha N-terminal domain (alpha-NTD); that stretch reads MVREKVTVST…DLFIPFLHAE (233 aa). Residues 265 to 331 are alpha C-terminal domain (alpha-CTD); the sequence is KEIELKYIFI…GILEKHFTID (67 aa).

Belongs to the RNA polymerase alpha chain family. As to quaternary structure, in plastids the minimal PEP RNA polymerase catalytic core is composed of four subunits: alpha, beta, beta', and beta''. When a (nuclear-encoded) sigma factor is associated with the core the holoenzyme is formed, which can initiate transcription.

It is found in the plastid. The protein localises to the chloroplast. The enzyme catalyses RNA(n) + a ribonucleoside 5'-triphosphate = RNA(n+1) + diphosphate. Functionally, DNA-dependent RNA polymerase catalyzes the transcription of DNA into RNA using the four ribonucleoside triphosphates as substrates. The polypeptide is DNA-directed RNA polymerase subunit alpha (Vitis vinifera (Grape)).